The chain runs to 433 residues: tRNA-2-methylthio-N(6)-dimethylallyladenosine synthase (433 aa).

The MTTase N-terminal domain occupies 3–118 (KKLFIQTLGC…ISRVIHQEKA (116 aa)). [4Fe-4S] cluster-binding residues include C12, C49, C81, C150, C154, and C157. The 234-residue stretch at 136 to 369 (SRNDYKAMVN…QARHKEILEE (234 aa)) folds into the Radical SAM core domain. The TRAM domain maps to 372–433 (QKEVGAIHSV…YRAFLIGEPL (62 aa)).

Belongs to the methylthiotransferase family. MiaB subfamily. As to quaternary structure, monomer. [4Fe-4S] cluster is required as a cofactor.

The protein localises to the cytoplasm. The catalysed reaction is N(6)-dimethylallyladenosine(37) in tRNA + (sulfur carrier)-SH + AH2 + 2 S-adenosyl-L-methionine = 2-methylsulfanyl-N(6)-dimethylallyladenosine(37) in tRNA + (sulfur carrier)-H + 5'-deoxyadenosine + L-methionine + A + S-adenosyl-L-homocysteine + 2 H(+). Functionally, catalyzes the methylthiolation of N6-(dimethylallyl)adenosine (i(6)A), leading to the formation of 2-methylthio-N6-(dimethylallyl)adenosine (ms(2)i(6)A) at position 37 in tRNAs that read codons beginning with uridine. This chain is tRNA-2-methylthio-N(6)-dimethylallyladenosine synthase, found in Wolinella succinogenes (strain ATCC 29543 / DSM 1740 / CCUG 13145 / JCM 31913 / LMG 7466 / NCTC 11488 / FDC 602W) (Vibrio succinogenes).